A 485-amino-acid polypeptide reads, in one-letter code: Glutamyl-tRNA(Gln) amidotransferase subunit A (485 aa).

Catalysis depends on charge relay system residues Lys79 and Ser154. Residue Ser178 is the Acyl-ester intermediate of the active site.

Belongs to the amidase family. GatA subfamily. In terms of assembly, heterotrimer of A, B and C subunits.

It catalyses the reaction L-glutamyl-tRNA(Gln) + L-glutamine + ATP + H2O = L-glutaminyl-tRNA(Gln) + L-glutamate + ADP + phosphate + H(+). Its function is as follows. Allows the formation of correctly charged Gln-tRNA(Gln) through the transamidation of misacylated Glu-tRNA(Gln) in organisms which lack glutaminyl-tRNA synthetase. The reaction takes place in the presence of glutamine and ATP through an activated gamma-phospho-Glu-tRNA(Gln). The protein is Glutamyl-tRNA(Gln) amidotransferase subunit A of Clostridium botulinum (strain ATCC 19397 / Type A).